A 543-amino-acid polypeptide reads, in one-letter code: Lipoyl synthase, apicoplast (543 aa).

Positions methionine 1 to serine 63 are cleaved as a signal peptide. [4Fe-4S] cluster is bound by residues cysteine 252, cysteine 257, cysteine 263, cysteine 278, cysteine 282, cysteine 285, and serine 493. Positions tryptophan 264 to lysine 482 constitute a Radical SAM core domain.

Belongs to the radical SAM superfamily. Lipoyl synthase family. [4Fe-4S] cluster is required as a cofactor.

The protein localises to the plastid. It localises to the apicoplast. It carries out the reaction [[Fe-S] cluster scaffold protein carrying a second [4Fe-4S](2+) cluster] + N(6)-octanoyl-L-lysyl-[protein] + 2 oxidized [2Fe-2S]-[ferredoxin] + 2 S-adenosyl-L-methionine + 4 H(+) = [[Fe-S] cluster scaffold protein] + N(6)-[(R)-dihydrolipoyl]-L-lysyl-[protein] + 4 Fe(3+) + 2 hydrogen sulfide + 2 5'-deoxyadenosine + 2 L-methionine + 2 reduced [2Fe-2S]-[ferredoxin]. It functions in the pathway protein modification; protein lipoylation via endogenous pathway; protein N(6)-(lipoyl)lysine from octanoyl-[acyl-carrier-protein]: step 2/2. In terms of biological role, catalyzes the radical-mediated insertion of two sulfur atoms into the C-6 and C-8 positions of the octanoyl moiety bound to the lipoyl domains of lipoate-dependent enzymes, thereby converting the octanoylated domains into lipoylated derivatives. The sequence is that of Lipoyl synthase, apicoplast from Toxoplasma gondii.